The following is a 1061-amino-acid chain: DNA primase TraC (1061 aa).

The region spanning 850–938 (PALVIGEGYA…GKAIFPIFAP (89 aa)) is the Toprim domain. Positions 1034 to 1061 (EGQRQKVQQLKQQDIEQQEQRQRRARTY) are disordered.

Required for autonomous replication in E.coli. Transferred into the recipient cell during bacterial conjugation. Catalyzes the synthesis of short oligoribonucleotide primers with CpA or pCpA at their 5'-termini on a single-stranded template DNA. The chain is DNA primase TraC (traC) from Escherichia coli.